Consider the following 358-residue polypeptide: Fructose-bisphosphate aldolase 6, cytosolic (358 aa).

The residue at position 2 (serine 2) is an N-acetylserine. Substrate is bound at residue arginine 39. Cysteine 68 is modified (S-glutathionyl cysteine; transient). Residue cysteine 173 is modified to S-glutathionyl cysteine; transient; alternate. Cysteine 173 carries the S-nitrosocysteine; transient; alternate modification. Glutamate 183 functions as the Proton acceptor in the catalytic mechanism. Lysine 225 acts as the Schiff-base intermediate with dihydroxyacetone-P in catalysis. Substrate-binding positions include 266-268 and arginine 298; that span reads SGG. Serine 350 is subject to Phosphoserine. Residue lysine 354 is modified to N6,N6,N6-trimethyllysine.

This sequence belongs to the class I fructose-bisphosphate aldolase family. As to quaternary structure, homotetramer. Interacts with TRX1 and TRX3. Interacts with GAPC1 and VDAC3. S-glutathionylated at Cys-68 and Cys-173. In terms of processing, S-nitrosylated at Cys-173. As to expression, expressed in roots, rosettes leaves, cauline leaves, stems and flowers.

It localises to the cytoplasm. The protein resides in the cytosol. The protein localises to the nucleus. It is found in the mitochondrion. The catalysed reaction is beta-D-fructose 1,6-bisphosphate = D-glyceraldehyde 3-phosphate + dihydroxyacetone phosphate. It participates in carbohydrate degradation; glycolysis; D-glyceraldehyde 3-phosphate and glycerone phosphate from D-glucose: step 4/4. Total and irreversible inhibition by S-nitrosoglutathione (GSNO). Partial and reversible inhibition by oxidized glutathione (GSSG). In terms of biological role, fructose-bisphosphate aldolase that plays a key role in glycolysis and gluconeogenesis. Associates with GAPC1 to the outer mitochondrial membrane, in a redox-dependent manner, leading to binding and bundling of actin. Actin binding and bundling occurs under oxidizing conditions and is reversible under reducing conditions. May be part of a redox-dependent retrograde signal transduction network for adaptation upon oxidative stress. The protein is Fructose-bisphosphate aldolase 6, cytosolic of Arabidopsis thaliana (Mouse-ear cress).